The sequence spans 394 residues: Elongation factor Tu (394 aa).

One can recognise a tr-type G domain in the interval 10–204 (KPHVNIGTIG…AVDSYIPQPV (195 aa)). A G1 region spans residues 19-26 (GHVDHGKT). Residue 19–26 (GHVDHGKT) coordinates GTP. Thr26 lines the Mg(2+) pocket. Residues 60 to 64 (GITIS) form a G2 region. The G3 stretch occupies residues 81–84 (DCPG). GTP is bound by residues 81–85 (DCPGH) and 136–139 (NKVD). Positions 136 to 139 (NKVD) are G4. The tract at residues 174 to 176 (SAL) is G5.

Belongs to the TRAFAC class translation factor GTPase superfamily. Classic translation factor GTPase family. EF-Tu/EF-1A subfamily. As to quaternary structure, monomer.

Its subcellular location is the cytoplasm. It catalyses the reaction GTP + H2O = GDP + phosphate + H(+). Functionally, GTP hydrolase that promotes the GTP-dependent binding of aminoacyl-tRNA to the A-site of ribosomes during protein biosynthesis. This Rickettsia helvetica protein is Elongation factor Tu.